Here is a 322-residue protein sequence, read N- to C-terminus: Probable uridine nucleosidase 2 (322 aa).

Catalysis depends on residues Asp-14 and His-246.

Belongs to the IUNH family. In terms of assembly, component of the NSH heterocomplex made of URH1/NSH1 and URH2/NSH2 which exhibits strong xanthosine nucleosidase activity. Interacts with URH1. In terms of tissue distribution, expressed in roots, seedlings and flowers.

The protein localises to the cytoplasm. It localises to the cytosol. The enzyme catalyses uridine + H2O = D-ribose + uracil. It carries out the reaction inosine + H2O = hypoxanthine + D-ribose. The catalysed reaction is xanthosine + H2O = D-ribose + xanthine. Its function is as follows. Involved in pyrimidine breakdown, especially in response to dark stress. In the presence of URH1, exhibits efficient inosine and xanthosine hydrolytic activities. Support inosine breakdown especially during the late phase of senescence. The sequence is that of Probable uridine nucleosidase 2 from Arabidopsis thaliana (Mouse-ear cress).